Consider the following 266-residue polypeptide: 4-hydroxy-tetrahydrodipicolinate reductase (266 aa).

Residue 10-15 (GPRGRM) coordinates NAD(+). Residue K38 coordinates NADP(+). NAD(+) contacts are provided by residues 99–101 (GTT) and 125–128 (APNF). H155 acts as the Proton donor/acceptor in catalysis. H156 is a binding site for (S)-2,3,4,5-tetrahydrodipicolinate. K159 (proton donor) is an active-site residue. A (S)-2,3,4,5-tetrahydrodipicolinate-binding site is contributed by 165–166 (GT).

Belongs to the DapB family.

It localises to the cytoplasm. It carries out the reaction (S)-2,3,4,5-tetrahydrodipicolinate + NAD(+) + H2O = (2S,4S)-4-hydroxy-2,3,4,5-tetrahydrodipicolinate + NADH + H(+). The enzyme catalyses (S)-2,3,4,5-tetrahydrodipicolinate + NADP(+) + H2O = (2S,4S)-4-hydroxy-2,3,4,5-tetrahydrodipicolinate + NADPH + H(+). It participates in amino-acid biosynthesis; L-lysine biosynthesis via DAP pathway; (S)-tetrahydrodipicolinate from L-aspartate: step 4/4. Its function is as follows. Catalyzes the conversion of 4-hydroxy-tetrahydrodipicolinate (HTPA) to tetrahydrodipicolinate. This Bacillus cereus (strain Q1) protein is 4-hydroxy-tetrahydrodipicolinate reductase.